The following is a 315-amino-acid chain: Calcium homeostasis modulator protein 6 (315 aa).

The Cytoplasmic segment spans residues 1–21 (MEKFRAVLDLHVKHHSALGYG). Residues 22-37 (LVTLLTAGGERIFSAV) form a helical membrane-spanning segment. Over 38–46 (AFQCPCSAA) the chain is Extracellular. Disulfide bonds link C41–C126, C43–C155, and C139–C146. Residues 47–68 (WNLPYGLVFLLVPALALFLLGY) traverse the membrane as a helical segment. Over 69–102 (VLSARTWRLLTGCCSSARASCGSALRGSLVCTQI) the chain is Cytoplasmic. The helical transmembrane segment at 103 to 127 (SAAAALAPLTWVAVALLGGAFYECA) threads the bilayer. The Extracellular portion of the chain corresponds to 128–169 (ATGSAAFAQRLCLGRNRSCAAELPLVPCNQAKASDVQDLLKD). Residues 170–192 (LKAQSQVLGWILIAVVIIILLIF) form a helical membrane-spanning segment. Residues 193–315 (TSVTRCLSPV…SSGINSTPEL (123 aa)) are Cytoplasmic-facing.

The protein belongs to the CALHM family. Oligomerizes to form decameric and undecameric channels. Post-translationally, N-glycosylated. As to expression, placenta.

The protein resides in the cell membrane. It catalyses the reaction ATP(in) = ATP(out). Pore-forming subunit of an ATP-permeable channel. In response to pathogen-derived and proinflammatory stimuli, relocates from intracellular compartments to NK-dendritic cell and NK-macrophage immune synapses where it mediates ATP efflux and NK cell activation involved in antimicrobial and antitumor responses. May assemble to form gap junction channel-like structures with gating and ion conductance likely regulated by membrane lipids and voltage rather than by extracellular calcium levels. The sequence is that of Calcium homeostasis modulator protein 6 from Homo sapiens (Human).